A 291-amino-acid chain; its full sequence is Homeobox protein SIX2 (291 aa).

The homeobox DNA-binding region spans 124-183 (GEETSYCFKEKSRSVLREWYAHNPYPSPREKRELAEATGLTTTQVSNWFKNRRQRDRAAE). The interval 168–279 (VSNWFKNRRQ…HHHGLQDSIL (112 aa)) is disordered. The span at 179–190 (DRAAEAKERENN) shows a compositional bias: basic and acidic residues. Low complexity predominate over residues 224–233 (HSSSSPALLL). The segment covering 249 to 259 (PPGPSAVPVPV) has biased composition (pro residues).

It belongs to the SIX/Sine oculis homeobox family. As to quaternary structure, interacts with TCF7L2; in a canonical Wnt signaling independent manner; prevents transcription of differentiation genes in cap mesenchyme. Interacts with OSR1; form a strong repressor complex with TCF7L2, TLE2 and TLE3 to prevent the activation of Wnt/beta-catenin target genes in the cap mesenchyme. Interacts with HOXA11, EYA1 and EYA3. In terms of tissue distribution, strongly expressed in skeletal muscle. Expressed in Wilms' tumor and in the cap mesenchyme of fetal kidney (at protein level).

Its subcellular location is the nucleus. In terms of biological role, transcription factor that plays an important role in the development of several organs, including kidney, skull and stomach. During kidney development, maintains cap mesenchyme multipotent nephron progenitor cells in an undifferentiated state by opposing the inductive signals emanating from the ureteric bud and cooperates with WNT9B to promote renewing progenitor cells proliferation. Acts through its interaction with TCF7L2 and OSR1 in a canonical Wnt signaling independent manner preventing transcription of differentiation genes in cap mesenchyme such as WNT4. Also acts independently of OSR1 to activate expression of many cap mesenchyme genes, including itself, GDNF and OSR1. During craniofacial development plays a role in growth and elongation of the cranial base through regulation of chondrocyte differentiation. During stomach organogenesis, controls pyloric sphincter formation and mucosal growth through regulation of a gene network including NKX2-5, BMPR1B, BMP4, SOX9 and GREM1. During branchial arch development, acts to mediate HOXA2 control over the insulin-like growth factor pathway. May also be involved in limb tendon and ligament development. Plays a role in cell proliferation and migration. In Homo sapiens (Human), this protein is Homeobox protein SIX2 (SIX2).